An 898-amino-acid polypeptide reads, in one-letter code: Protein SOV1, mitochondrial (898 aa).

Residues 1–31 (MFKYNRSLCSSALIAKSQIRFYRLKRAPLNY) constitute a mitochondrion transit peptide.

It is found in the mitochondrion. The chain is Protein SOV1, mitochondrial (SOV1) from Saccharomyces cerevisiae (strain ATCC 204508 / S288c) (Baker's yeast).